The chain runs to 291 residues: Nucleotide-binding protein jk1004 (291 aa).

16-23 provides a ligand contact to ATP; sequence GMSGAGRR. 67-70 serves as a coordination point for GTP; it reads DVRS.

The protein belongs to the RapZ-like family.

Its function is as follows. Displays ATPase and GTPase activities. The chain is Nucleotide-binding protein jk1004 from Corynebacterium jeikeium (strain K411).